We begin with the raw amino-acid sequence, 164 residues long: MTKVVYPGTFDPITKGHLDILVRAAQVFDQVTLLVLSNLQKKSLFSLEERVRLAKSAIEESNAPSNIIVDSYEGVTVHYLEEHGIRLIIRGLRAVSDYEYEIQLFLANKYLNSQVETVLMPTSLRYQFVSSSLVKEMVSFGLDVSEFVTPTVERALKEKLEVKQ.

A substrate-binding site is contributed by T9. Residues 9-10 and H17 each bind ATP; that span reads TF. Residues K41, T76, and R90 each contribute to the substrate site. Residues 91–93, E101, and 126–132 contribute to the ATP site; these read GLR and YQFVSSS.

It belongs to the bacterial CoaD family. Homohexamer. The cofactor is Mg(2+).

It localises to the cytoplasm. It carries out the reaction (R)-4'-phosphopantetheine + ATP + H(+) = 3'-dephospho-CoA + diphosphate. It functions in the pathway cofactor biosynthesis; coenzyme A biosynthesis; CoA from (R)-pantothenate: step 4/5. Reversibly transfers an adenylyl group from ATP to 4'-phosphopantetheine, yielding dephospho-CoA (dPCoA) and pyrophosphate. This is Phosphopantetheine adenylyltransferase from Coprothermobacter proteolyticus (strain ATCC 35245 / DSM 5265 / OCM 4 / BT).